A 177-amino-acid chain; its full sequence is Interleukin-19 (177 aa).

An N-terminal signal peptide occupies residues 1-24; sequence MKLQCVSLWLLGTILILCSVDNHG. 3 disulfides stabilise this stretch: cysteine 28–cysteine 121, cysteine 75–cysteine 127, and cysteine 76–cysteine 129. An N-linked (GlcNAc...) asparagine glycan is attached at asparagine 56. N-linked (GlcNAc...) asparagine glycosylation occurs at asparagine 135.

This sequence belongs to the IL-10 family.

The protein resides in the secreted. Cytokine that functions as an anti-inflammatory and proangiogenic factor. Polarizes adaptive immunity to an anti-inflammatory phenotype through induction of T-helper 2 responses by both down-regulation of IFN-gamma and up-regulation of IL4 and IL13. Produced by osteocytes, stimulates granulopoiesis and neutrophil formation. Exerts its biological effect through a receptor complex consisting of a heterodimer of IL20RA and IL20RB. In turn, activates the Janus kinase (JAK) and signal transducer and activator of transcription (STAT) pathway, and importantly, STAT3. The polypeptide is Interleukin-19 (IL19) (Homo sapiens (Human)).